The sequence spans 238 residues: Small ribosomal subunit protein uS2c (238 aa).

Belongs to the universal ribosomal protein uS2 family.

Its subcellular location is the plastid. It localises to the chloroplast. The polypeptide is Small ribosomal subunit protein uS2c (rps2) (Oltmannsiellopsis viridis (Marine flagellate)).